Here is a 344-residue protein sequence, read N- to C-terminus: Protein RecA (344 aa).

65–72 (GPESSGKT) provides a ligand contact to ATP.

It belongs to the RecA family.

It is found in the cytoplasm. Can catalyze the hydrolysis of ATP in the presence of single-stranded DNA, the ATP-dependent uptake of single-stranded DNA by duplex DNA, and the ATP-dependent hybridization of homologous single-stranded DNAs. It interacts with LexA causing its activation and leading to its autocatalytic cleavage. The protein is Protein RecA of Nitratiruptor sp. (strain SB155-2).